We begin with the raw amino-acid sequence, 374 residues long: DNA replication and repair protein RecF (374 aa).

34–41 (GDNGAGKT) contributes to the ATP binding site.

The protein belongs to the RecF family.

It localises to the cytoplasm. The RecF protein is involved in DNA metabolism; it is required for DNA replication and normal SOS inducibility. RecF binds preferentially to single-stranded, linear DNA. It also seems to bind ATP. The chain is DNA replication and repair protein RecF from Rhizobium etli (strain ATCC 51251 / DSM 11541 / JCM 21823 / NBRC 15573 / CFN 42).